The chain runs to 356 residues: Protein ATP1B4 (356 aa).

At 1–109 the chain is on the nuclear side; it reads MRRQLRSRRA…SLARTGQSRS (109 aa). A disordered region spans residues 26–78; it reads EANHNYLADEEEEAEEEAQVMMVPGLEEEEEEEEGKEEEEEREEEEGQGQSTG. Acidic residues-rich tracts occupy residues 33 to 43 and 51 to 72; these read ADEEEEAEEEA and LEEE…EEEG. The chain crosses the membrane as a helical; Signal-anchor for type II membrane protein span at residues 110–130; sequence LILVIYFFFYASLAAVITLFI. The Perinuclear space segment spans residues 131–356; that stretch reads YMLFLAISPY…RIIFTLNIET (226 aa).

Belongs to the X(+)/potassium ATPases subunit beta family. As to quaternary structure, associates with a SMAD7-transcriptional complex. Interacts with TOR1AIP1. Does not associate with known Na,K-ATPase alpha-subunits. Interacts with SNW1. Expressed in skeletal muscle (at protein level). Expressed during postnatal development in skeletal muscle and heart.

It is found in the nucleus inner membrane. In terms of biological role, may act as a transcriptional coregulator during muscle development through its interaction with SNW1. Has lost its ancestral function as a Na,K-ATPase beta-subunit. This Mus musculus (Mouse) protein is Protein ATP1B4 (Atp1b4).